Reading from the N-terminus, the 953-residue chain is Glutamate receptor 3.5 (953 aa).

The first 29 residues, 1 to 29 (MGFFVMIRDVSMGFMLLCISALWVLPIQG), serve as a signal peptide directing secretion. The Extracellular portion of the chain corresponds to 30–606 (AGRESFSRNS…SPWSFLKPFT (577 aa)). Residues asparagine 38, asparagine 95, asparagine 223, asparagine 371, asparagine 397, asparagine 436, asparagine 454, and asparagine 569 are each glycosylated (N-linked (GlcNAc...) asparagine). Residues 607-627 (IEMWAVTGALFLFVGAVIWIL) form a helical membrane-spanning segment. Over 628-636 (EHRFNEEFR) the chain is Cytoplasmic. The helical transmembrane segment at 637–657 (GPPRRQIITVFWFSFSTMFFS) threads the bilayer. Over 658-668 (HRENTVSTLGR) the chain is Cytoplasmic. The helical transmembrane segment at 669–689 (FVLLVWLFVVLIINSSYTASL) threads the bilayer. At 690–850 (TSILTVQQLT…TENYQISVQS (161 aa)) the chain is on the extracellular side. Residues 851-871 (FWGLFLICGVVWFIALTLFCW) form a helical membrane-spanning segment. Over 872–953 (KVFWQYQRLR…SQSKDHETPQ (82 aa)) the chain is Cytoplasmic. The segment at 928–953 (EKSSKKLKDGQSSAENSQSKDHETPQ) is disordered.

Belongs to the glutamate-gated ion channel (TC 1.A.10.1) family. As to quaternary structure, may form heteromers. As to expression, expressed predominantly in roots. Also detected in shoots.

It localises to the membrane. Its function is as follows. Glutamate-gated receptor that probably acts as a non-selective cation channel. May be involved in light-signal transduction and calcium homeostasis via the regulation of calcium influx into cells. This is Glutamate receptor 3.5 (GLR3.5) from Arabidopsis thaliana (Mouse-ear cress).